A 338-amino-acid polypeptide reads, in one-letter code: Galactinol synthase 2 (338 aa).

Lysine 105 is an active-site residue. Residues aspartate 121, aspartate 123, and histidine 258 each contribute to the Mn(2+) site.

The protein belongs to the glycosyltransferase 8 family. Galactosyltransferase subfamily. The cofactor is a divalent metal cation.

The protein localises to the cytoplasm. It carries out the reaction myo-inositol + UDP-alpha-D-galactose = alpha-D-galactosyl-(1-&gt;3)-1D-myo-inositol + UDP + H(+). Functionally, galactinol synthase involved in the biosynthesis of raffinose family oligosaccharides (RFOs) that function as osmoprotectants. May promote plant stress tolerance. This Solanum lycopersicum (Tomato) protein is Galactinol synthase 2 (GOLS2).